The primary structure comprises 221 residues: Interleukin-12 subunit alpha (221 aa).

A signal peptide spans 1-25 (MCPLRSLLLISTLVLLHHLPHLSLG). 3 cysteine pairs are disulfide-bonded: Cys39/Cys112, Cys66/Cys198, and Cys87/Cys125. The N-linked (GlcNAc...) asparagine glycan is linked to Asn95.

The protein belongs to the IL-6 superfamily. Heterodimer with IL12B; disulfide-linked. This heterodimer is known as interleukin IL-12. Heterodimer with EBI3/IL27B; not disulfide-linked. This heterodimer is known as interleukin IL-35. Interacts with NBR1; this interaction promotes IL-12 secretion.

Its subcellular location is the secreted. In terms of biological role, heterodimerizes with IL12B to form the IL-12 cytokine or with EBI3/IL27B to form the IL-35 cytokine. IL-12 is primarily produced by professional antigen-presenting cells (APCs) such as B-cells and dendritic cells (DCs) as well as macrophages and granulocytes and regulates T-cell and natural killer-cell responses, induces the production of interferon-gamma (IFN-gamma), favors the differentiation of T-helper 1 (Th1) cells and is an important link between innate resistance and adaptive immunity. Mechanistically, exerts its biological effects through a receptor composed of IL12R1 and IL12R2 subunits. Binding to the receptor results in the rapid tyrosine phosphorylation of a number of cellular substrates including the JAK family kinases TYK2 and JAK2. In turn, recruited STAT4 gets phosphorylated and translocates to the nucleus where it regulates cytokine/growth factor responsive genes. As part of IL-35, plays essential roles in maintaining the immune homeostasis of the liver microenvironment and also functions as an immune-suppressive cytokine. Mediates biological events through unconventional receptors composed of IL12RB2 and gp130/IL6ST heterodimers or homodimers. Signaling requires the transcription factors STAT1 and STAT4, which form a unique heterodimer that binds to distinct DNA sites. This chain is Interleukin-12 subunit alpha (IL12A), found in Capra hircus (Goat).